Here is a 101-residue protein sequence, read N- to C-terminus: YcgL domain-containing protein ABBFA_001807 (101 aa).

Positions 1–92 (MHCDIYRSSK…PPEGLINPNA (92 aa)) constitute a YcgL domain.

This Acinetobacter baumannii (strain AB307-0294) protein is YcgL domain-containing protein ABBFA_001807.